The primary structure comprises 184 residues: NADH-quinone oxidoreductase subunit B (184 aa).

[4Fe-4S] cluster contacts are provided by C37, C38, C103, and C132.

The protein belongs to the complex I 20 kDa subunit family. In terms of assembly, NDH-1 is composed of 14 different subunits. Subunits NuoB, C, D, E, F, and G constitute the peripheral sector of the complex. Requires [4Fe-4S] cluster as cofactor.

The protein localises to the cell membrane. It carries out the reaction a quinone + NADH + 5 H(+)(in) = a quinol + NAD(+) + 4 H(+)(out). NDH-1 shuttles electrons from NADH, via FMN and iron-sulfur (Fe-S) centers, to quinones in the respiratory chain. The immediate electron acceptor for the enzyme in this species is believed to be a menaquinone. Couples the redox reaction to proton translocation (for every two electrons transferred, four hydrogen ions are translocated across the cytoplasmic membrane), and thus conserves the redox energy in a proton gradient. This chain is NADH-quinone oxidoreductase subunit B, found in Mycobacterium marinum (strain ATCC BAA-535 / M).